Here is a 251-residue protein sequence, read N- to C-terminus: uncharacterized protein (251 aa).

This is an uncharacterized protein from Acanthamoeba polyphaga mimivirus (APMV).